Here is a 116-residue protein sequence, read N- to C-terminus: Non-specific lipid-transfer protein (116 aa).

Positions 1–25 (MASMVMNVLCVAVACMVFSASYADA) are cleaved as a signal peptide. 4 disulfides stabilise this stretch: Cys28–Cys75, Cys38–Cys52, Cys53–Cys98, and Cys73–Cys112.

Belongs to the plant LTP family.

Plant non-specific lipid-transfer proteins transfer phospholipids as well as galactolipids across membranes. May play a role in wax or cutin deposition in the cell walls of expanding epidermal cells and certain secretory tissues. This chain is Non-specific lipid-transfer protein, found in Gerbera hybrida (Daisy).